An 860-amino-acid polypeptide reads, in one-letter code: DNA mismatch repair protein MutS (860 aa).

607–614 (GPNMSGKS) contributes to the ATP binding site.

It belongs to the DNA mismatch repair MutS family.

Functionally, this protein is involved in the repair of mismatches in DNA. It is possible that it carries out the mismatch recognition step. This protein has a weak ATPase activity. This Listeria monocytogenes serovar 1/2a (strain ATCC BAA-679 / EGD-e) protein is DNA mismatch repair protein MutS.